The chain runs to 340 residues: Phenylalanine--tRNA ligase alpha subunit (340 aa).

Glutamate 258 contacts Mg(2+).

The protein belongs to the class-II aminoacyl-tRNA synthetase family. Phe-tRNA synthetase alpha subunit type 1 subfamily. As to quaternary structure, tetramer of two alpha and two beta subunits. Requires Mg(2+) as cofactor.

The protein localises to the cytoplasm. The catalysed reaction is tRNA(Phe) + L-phenylalanine + ATP = L-phenylalanyl-tRNA(Phe) + AMP + diphosphate + H(+). This is Phenylalanine--tRNA ligase alpha subunit from Corynebacterium glutamicum (strain ATCC 13032 / DSM 20300 / JCM 1318 / BCRC 11384 / CCUG 27702 / LMG 3730 / NBRC 12168 / NCIMB 10025 / NRRL B-2784 / 534).